The primary structure comprises 221 residues: Placenta growth factor (221 aa).

The first 18 residues, 1-18 (MPVMRLFPCFLQLLAGLA), serve as a signal peptide directing secretion. N-linked (GlcNAc...) asparagine glycosylation occurs at Asn-33. 3 cysteine pairs are disulfide-bonded: Cys-52/Cys-94, Cys-83/Cys-128, and Cys-87/Cys-130. N-linked (GlcNAc...) asparagine glycosylation is present at Asn-101. Residues 175–221 (QSAVWPSSPVPEEIPRMHPGRNGKKQQRKPLREKMKPERCGDAVPRR) are disordered. Basic residues predominate over residues 192–203 (HPGRNGKKQQRK). Positions 193–213 (PGRNGKKQQRKPLREKMKPER) are heparin-binding. Residues 204–221 (PLREKMKPERCGDAVPRR) are compositionally biased toward basic and acidic residues.

It belongs to the PDGF/VEGF growth factor family. In terms of assembly, antiparallel homodimer; disulfide-linked. Also found as heterodimer with VEGFA/VEGF. Isoform PlGF-3 is found both as homodimer and as monomer. N-glycosylated. While the three isoforms are present in most placental tissues, PlGF-2 is specific to early (8 week) placenta and only PlGF-1 is found in the colon and mammary carcinomas.

It localises to the secreted. Its function is as follows. Growth factor active in angiogenesis and endothelial cell growth, stimulating their proliferation and migration. It binds to the receptor FLT1/VEGFR-1. Isoform PlGF-2 binds NRP1/neuropilin-1 and NRP2/neuropilin-2 in a heparin-dependent manner. Also promotes cell tumor growth. This chain is Placenta growth factor (PGF), found in Homo sapiens (Human).